The sequence spans 329 residues: Caveolae-associated protein 4a (329 aa).

Disordered regions lie at residues 198 to 260 and 274 to 329; these read SKEN…NIAK and KERT…IHED. Positions 198–262 form a coiled coil; it reads SKENMNKTRE…RLKENIAKKA (65 aa). The span at 201-220 shows a compositional bias: basic and acidic residues; the sequence is NMNKTREKTRENLSKTKESL. A compositionally biased stretch (polar residues) spans 221 to 232; the sequence is SKTGQTLGTKFN. The span at 242–260 shows a compositional bias: basic and acidic residues; sequence EQREKIKQSSERLKENIAK. The segment covering 279-290 has biased composition (low complexity); it reads AEGQEGAEAEPA. Residue Thr292 is modified to Phosphothreonine. A compositionally biased stretch (basic and acidic residues) spans 310–329; the sequence is TENKREGPVSEEGATRIHED.

Belongs to the CAVIN family.

Its subcellular location is the cytoplasm. It is found in the myofibril. It localises to the sarcomere. The protein localises to the membrane. The protein resides in the caveola. Its function is as follows. Induces rhoa activation and activates nppa transcription and myofibrillar organization through the rho/rock signaling pathway. This chain is Caveolae-associated protein 4a (cavin4a), found in Danio rerio (Zebrafish).